The primary structure comprises 289 residues: Acetyl-coenzyme A carboxylase carboxyl transferase subunit beta (289 aa).

Positions Val-28–Ser-289 constitute a CoA carboxyltransferase N-terminal domain. Zn(2+)-binding residues include Cys-32, Cys-35, Cys-51, and Cys-54. The C4-type zinc finger occupies Cys-32 to Cys-54.

Belongs to the AccD/PCCB family. As to quaternary structure, acetyl-CoA carboxylase is a heterohexamer composed of biotin carboxyl carrier protein (AccB), biotin carboxylase (AccC) and two subunits each of ACCase subunit alpha (AccA) and ACCase subunit beta (AccD). Requires Zn(2+) as cofactor.

The protein localises to the cytoplasm. The enzyme catalyses N(6)-carboxybiotinyl-L-lysyl-[protein] + acetyl-CoA = N(6)-biotinyl-L-lysyl-[protein] + malonyl-CoA. The protein operates within lipid metabolism; malonyl-CoA biosynthesis; malonyl-CoA from acetyl-CoA: step 1/1. Functionally, component of the acetyl coenzyme A carboxylase (ACC) complex. Biotin carboxylase (BC) catalyzes the carboxylation of biotin on its carrier protein (BCCP) and then the CO(2) group is transferred by the transcarboxylase to acetyl-CoA to form malonyl-CoA. The protein is Acetyl-coenzyme A carboxylase carboxyl transferase subunit beta of Bacillus cereus (strain ATCC 14579 / DSM 31 / CCUG 7414 / JCM 2152 / NBRC 15305 / NCIMB 9373 / NCTC 2599 / NRRL B-3711).